Reading from the N-terminus, the 323-residue chain is Mitochondrial glutamate carrier 1 (323 aa).

Solcar repeat units lie at residues Ile-6 to Gln-93, Leu-101 to Leu-214, and Ser-223 to Glu-312. 6 helical membrane-spanning segments follow: residues Leu-12 to Ala-32, Tyr-62 to Ile-82, Met-107 to Leu-127, Gly-189 to Ala-209, Ser-223 to Val-243, and Ala-292 to Glu-312.

This sequence belongs to the mitochondrial carrier (TC 2.A.29) family. As to expression, expressed at high levels in brain, liver, and pancreas.

The protein localises to the mitochondrion inner membrane. The enzyme catalyses L-glutamate(in) + H(+)(in) = L-glutamate(out) + H(+)(out). Its function is as follows. Mitochondrial glutamate/H(+) symporter. Responsible for the transport of glutamate from the cytosol into the mitochondrial matrix with the concomitant import of a proton. Plays a role in the control of glucose-stimulated insulin secretion. The sequence is that of Mitochondrial glutamate carrier 1 from Homo sapiens (Human).